The sequence spans 153 residues: Interleukin-17A (153 aa).

The first 23 residues, 1-23, serve as a signal peptide directing secretion; that stretch reads MASMRTSSMSLLLLLSLVALVKA. N53 carries N-linked (GlcNAc...) asparagine glycosylation. Residues 56 to 76 form a disordered region; that stretch reads TNSRRPTDYHKRSTSPWTLHR. 2 disulfide bridges follow: C92–C142 and C97–C144.

This sequence belongs to the IL-17 family. In terms of assembly, homodimer. Forms complexes with IL17RA and IL17RC receptors with 2:1 binding stoichiometry: two receptor chains for one interleukin molecule. IL17A homodimer preferentially drives the formation of IL17RA-IL17RC heterodimeric receptor complex. IL17A homodimer adopts an asymmetrical ternary structure with one IL17RA molecule, allowing for high affinity interactions of one IL17A monomer with one IL17RA molecule (via D1 and D2 domains), while disfavoring binding of a second IL17RA molecule on the other IL17A monomer. Heterodimer with IL17F. IL17A-IL17F forms complexes with IL17RA-IL17RC, but with lower affinity when compared to IL17A homodimer. IL17RA and IL17RC chains cannot distinguish between IL17A and IL17F molecules, potentially enabling the formation of topologically distinct complexes.

It localises to the secreted. In terms of biological role, effector cytokine of innate and adaptive immune system involved in antimicrobial host defense and maintenance of tissue integrity. Signals via IL17RA-IL17RC heterodimeric receptor complex, triggering homotypic interaction of IL17RA and IL17RC chains with TRAF3IP2 adapter. This leads to downstream TRAF6-mediated activation of NF-kappa-B and MAPkinase pathways ultimately resulting in transcriptional activation of cytokines, chemokines, antimicrobial peptides and matrix metalloproteinases, with potential strong immune inflammation. Plays an important role in connecting T cell-mediated adaptive immunity and acute inflammatory response to destroy extracellular bacteria and fungi. As a signature effector cytokine of T-helper 17 cells (Th17), primarily induces neutrophil activation and recruitment at infection and inflammatory sites. In airway epithelium, mediates neutrophil chemotaxis via induction of CXCL1 and CXCL5 chemokines. In secondary lymphoid organs, contributes to germinal center formation by regulating the chemotactic response of B cells to CXCL12 and CXCL13, enhancing retention of B cells within the germinal centers, B cell somatic hypermutation rate and selection toward plasma cells. Effector cytokine of a subset of gamma-delta T cells that functions as part of an inflammatory circuit downstream IL1B, TLR2 and IL23A-IL12B to promote neutrophil recruitment for efficient bacterial clearance. Effector cytokine of innate immune cells including invariant natural killer cell (iNKT) and group 3 innate lymphoid cells that mediate initial neutrophilic inflammation. Involved in the maintenance of the integrity of epithelial barriers during homeostasis and pathogen infection. Upon acute injury, has a direct role in epithelial barrier formation by regulating OCLN localization and tight junction biogenesis. As part of the mucosal immune response induced by commensal bacteria, enhances host's ability to resist pathogenic bacterial and fungal infections by promoting neutrophil recruitment and antimicrobial peptides release. In synergy with IL17F, mediates the production of antimicrobial beta-defensins DEFB1, DEFB103A, and DEFB104A by mucosal epithelial cells, limiting the entry of microbes through the epithelial barriers. Involved in antiviral host defense through various mechanisms. Enhances immunity against West Nile virus by promoting T cell cytotoxicity. May play a beneficial role in influenza A virus (H5N1) infection by enhancing B cell recruitment and immune response in the lung. Contributes to influenza A virus (H1N1) clearance by driving the differentiation of B-1a B cells, providing for production of virus-specific IgM antibodies at first line of host defense. This is Interleukin-17A (IL17A) from Bos taurus (Bovine).